A 159-amino-acid polypeptide reads, in one-letter code: 2-C-methyl-D-erythritol 2,4-cyclodiphosphate synthase (159 aa).

A divalent metal cation is bound by residues Asp-10 and His-12. 4-CDP-2-C-methyl-D-erythritol 2-phosphate is bound by residues 10–12 (DVH) and 37–38 (HS). A divalent metal cation is bound at residue His-45. 4-CDP-2-C-methyl-D-erythritol 2-phosphate is bound by residues 59–61 (DIG), 64–68 (FLDTD), 103–109 (AQAPKML), 135–138 (TTTE), Phe-142, and Arg-145.

This sequence belongs to the IspF family. Homotrimer. A divalent metal cation serves as cofactor.

The enzyme catalyses 4-CDP-2-C-methyl-D-erythritol 2-phosphate = 2-C-methyl-D-erythritol 2,4-cyclic diphosphate + CMP. It functions in the pathway isoprenoid biosynthesis; isopentenyl diphosphate biosynthesis via DXP pathway; isopentenyl diphosphate from 1-deoxy-D-xylulose 5-phosphate: step 4/6. Involved in the biosynthesis of isopentenyl diphosphate (IPP) and dimethylallyl diphosphate (DMAPP), two major building blocks of isoprenoid compounds. Catalyzes the conversion of 4-diphosphocytidyl-2-C-methyl-D-erythritol 2-phosphate (CDP-ME2P) to 2-C-methyl-D-erythritol 2,4-cyclodiphosphate (ME-CPP) with a corresponding release of cytidine 5-monophosphate (CMP). In Francisella tularensis subsp. holarctica (strain OSU18), this protein is 2-C-methyl-D-erythritol 2,4-cyclodiphosphate synthase.